The chain runs to 289 residues: MPKASHQDLRRSFRALTSSNSCFHTASVFDPMSARIAADLGFEVGILGGSVASLQVLAAPDFALITLSEFVEQATRIGRVAQLPVIADADHGYGNALNVMRTVVELERAGISALTIEDTLLPAQFGRKSTDLISTAEGVGKIRAALEARVDPEMSIFARTNAAIIPVQEAISRVQQYQAAGADGITIVGIRDFDHLAQISEGVTVPLMLVTYGNPELHDNARLAEMGVRVCVHGHAAYFAAIKATYDCLREQRQILGSESNMSATELTHTYTQPEDYVEWARKFMNVNE.

Serine 50 contributes to the substrate binding site. Residue aspartate 88 participates in Mg(2+) binding. Residues arginine 159 and histidine 235 each contribute to the substrate site.

It belongs to the isocitrate lyase/PEP mutase superfamily. Oxaloacetate decarboxylase family. In terms of assembly, homotetramer; dimer of dimers. The cofactor is Mg(2+).

It catalyses the reaction oxaloacetate + H(+) = pyruvate + CO2. In terms of biological role, catalyzes the decarboxylation of oxaloacetate into pyruvate. Seems to play a role in maintaining cellular concentrations of bicarbonate and pyruvate. This is Oxaloacetate decarboxylase from Pseudomonas savastanoi pv. phaseolicola (strain 1448A / Race 6) (Pseudomonas syringae pv. phaseolicola (strain 1448A / Race 6)).